We begin with the raw amino-acid sequence, 337 residues long: Holliday junction branch migration complex subunit RuvB (337 aa).

Positions 1-182 are large ATPase domain (RuvB-L); that stretch reads MSEEKSVLRD…FGAVFRLSYY (182 aa). Residues leucine 21, arginine 22, glycine 63, lysine 66, threonine 67, threonine 68, 129-131, arginine 172, tyrosine 182, and arginine 219 each bind ATP; that span reads EDY. Threonine 67 provides a ligand contact to Mg(2+). A small ATPAse domain (RuvB-S) region spans residues 183–253; that stretch reads KLEEIKQIVR…ITQLALTKLG (71 aa). Residues 256–337 are head domain (RuvB-H); it reads HKGLDASDYL…VKYYKGLLDN (82 aa). Residues arginine 311 and arginine 316 each contribute to the DNA site.

The protein belongs to the RuvB family. In terms of assembly, homohexamer. Forms an RuvA(8)-RuvB(12)-Holliday junction (HJ) complex. HJ DNA is sandwiched between 2 RuvA tetramers; dsDNA enters through RuvA and exits via RuvB. An RuvB hexamer assembles on each DNA strand where it exits the tetramer. Each RuvB hexamer is contacted by two RuvA subunits (via domain III) on 2 adjacent RuvB subunits; this complex drives branch migration. In the full resolvosome a probable DNA-RuvA(4)-RuvB(12)-RuvC(2) complex forms which resolves the HJ.

It localises to the cytoplasm. It catalyses the reaction ATP + H2O = ADP + phosphate + H(+). Functionally, the RuvA-RuvB-RuvC complex processes Holliday junction (HJ) DNA during genetic recombination and DNA repair, while the RuvA-RuvB complex plays an important role in the rescue of blocked DNA replication forks via replication fork reversal (RFR). RuvA specifically binds to HJ cruciform DNA, conferring on it an open structure. The RuvB hexamer acts as an ATP-dependent pump, pulling dsDNA into and through the RuvAB complex. RuvB forms 2 homohexamers on either side of HJ DNA bound by 1 or 2 RuvA tetramers; 4 subunits per hexamer contact DNA at a time. Coordinated motions by a converter formed by DNA-disengaged RuvB subunits stimulates ATP hydrolysis and nucleotide exchange. Immobilization of the converter enables RuvB to convert the ATP-contained energy into a lever motion, pulling 2 nucleotides of DNA out of the RuvA tetramer per ATP hydrolyzed, thus driving DNA branch migration. The RuvB motors rotate together with the DNA substrate, which together with the progressing nucleotide cycle form the mechanistic basis for DNA recombination by continuous HJ branch migration. Branch migration allows RuvC to scan DNA until it finds its consensus sequence, where it cleaves and resolves cruciform DNA. The chain is Holliday junction branch migration complex subunit RuvB from Acholeplasma laidlawii (strain PG-8A).